A 579-amino-acid polypeptide reads, in one-letter code: Arginine--tRNA ligase (579 aa).

The 'HIGH' region signature appears at 127–137 (PNLAKEMHVGH).

It belongs to the class-I aminoacyl-tRNA synthetase family. As to quaternary structure, monomer.

The protein localises to the cytoplasm. The enzyme catalyses tRNA(Arg) + L-arginine + ATP = L-arginyl-tRNA(Arg) + AMP + diphosphate. In Stutzerimonas stutzeri (strain A1501) (Pseudomonas stutzeri), this protein is Arginine--tRNA ligase.